The chain runs to 25 residues: Small ribosomal subunit protein eS32 eS32z/eS32y/eS32x/eS32w/eS32v (25 aa).

The segment at 1-25 (MRAKWKKKRMRRLKRKRRKMRQRSK) is disordered.

It belongs to the eukaryotic ribosomal protein eS32 family. As to quaternary structure, component of the small ribosomal subunit (SSU).

The chain is Small ribosomal subunit protein eS32 eS32z/eS32y/eS32x/eS32w/eS32v (RPL41A) from Arabidopsis thaliana (Mouse-ear cress).